The sequence spans 116 residues: Large ribosomal subunit protein bL19 (116 aa).

The protein belongs to the bacterial ribosomal protein bL19 family.

In terms of biological role, this protein is located at the 30S-50S ribosomal subunit interface and may play a role in the structure and function of the aminoacyl-tRNA binding site. This is Large ribosomal subunit protein bL19 from Pseudomonas putida (strain ATCC 700007 / DSM 6899 / JCM 31910 / BCRC 17059 / LMG 24140 / F1).